The chain runs to 426 residues: Serine--tRNA ligase (426 aa).

231–233 contacts L-serine; it reads TSE. Residue 262–264 coordinates ATP; sequence RSE. Position 285 (glutamate 285) interacts with L-serine. 349–352 contacts ATP; sequence EISS. Serine 385 is a binding site for L-serine.

Belongs to the class-II aminoacyl-tRNA synthetase family. Type-1 seryl-tRNA synthetase subfamily. Homodimer. The tRNA molecule binds across the dimer.

The protein resides in the cytoplasm. The enzyme catalyses tRNA(Ser) + L-serine + ATP = L-seryl-tRNA(Ser) + AMP + diphosphate + H(+). It catalyses the reaction tRNA(Sec) + L-serine + ATP = L-seryl-tRNA(Sec) + AMP + diphosphate + H(+). It participates in aminoacyl-tRNA biosynthesis; selenocysteinyl-tRNA(Sec) biosynthesis; L-seryl-tRNA(Sec) from L-serine and tRNA(Sec): step 1/1. Catalyzes the attachment of serine to tRNA(Ser). Is also able to aminoacylate tRNA(Sec) with serine, to form the misacylated tRNA L-seryl-tRNA(Sec), which will be further converted into selenocysteinyl-tRNA(Sec). The chain is Serine--tRNA ligase from Legionella pneumophila subsp. pneumophila (strain Philadelphia 1 / ATCC 33152 / DSM 7513).